Here is a 262-residue protein sequence, read N- to C-terminus: Mitochondrial calcium uniporter regulator 1 (262 aa).

A coiled-coil region spans residues 138–175 (EKSEFSALRTQNEKVKIELQQLKKQLNDSIVKVRASNK). Residues 239-261 (TIKYLAGSVFTCLTIALGFYRLW) traverse the membrane as a helical segment.

This sequence belongs to the CCDC90 family.

It is found in the mitochondrion inner membrane. In terms of biological role, key regulator of mitochondrial calcium uniporter (mcu) required for calcium entry into mitochondrion. This chain is Mitochondrial calcium uniporter regulator 1, found in Xenopus tropicalis (Western clawed frog).